The chain runs to 251 residues: Pyrroloquinoline-quinone synthase (251 aa).

It belongs to the PqqC family.

The catalysed reaction is 6-(2-amino-2-carboxyethyl)-7,8-dioxo-1,2,3,4,7,8-hexahydroquinoline-2,4-dicarboxylate + 3 O2 = pyrroloquinoline quinone + 2 H2O2 + 2 H2O + H(+). It functions in the pathway cofactor biosynthesis; pyrroloquinoline quinone biosynthesis. In terms of biological role, ring cyclization and eight-electron oxidation of 3a-(2-amino-2-carboxyethyl)-4,5-dioxo-4,5,6,7,8,9-hexahydroquinoline-7,9-dicarboxylic-acid to PQQ. The sequence is that of Pyrroloquinoline-quinone synthase from Cronobacter sakazakii (strain ATCC BAA-894) (Enterobacter sakazakii).